The sequence spans 120 residues: UPF0295 protein Aflv_0370 (120 aa).

2 helical membrane-spanning segments follow: residues 12 to 32 and 42 to 62; these read IRTFALSLIFIGFFVMYGGIF and LFMILGLLFIIASTVVYFWIG.

It belongs to the UPF0295 family.

The protein resides in the cell membrane. This chain is UPF0295 protein Aflv_0370, found in Anoxybacillus flavithermus (strain DSM 21510 / WK1).